Consider the following 483-residue polypeptide: Aspartyl/glutamyl-tRNA(Asn/Gln) amidotransferase subunit B (483 aa).

Belongs to the GatB/GatE family. GatB subfamily. Heterotrimer of A, B and C subunits.

The catalysed reaction is L-glutamyl-tRNA(Gln) + L-glutamine + ATP + H2O = L-glutaminyl-tRNA(Gln) + L-glutamate + ADP + phosphate + H(+). It carries out the reaction L-aspartyl-tRNA(Asn) + L-glutamine + ATP + H2O = L-asparaginyl-tRNA(Asn) + L-glutamate + ADP + phosphate + 2 H(+). Allows the formation of correctly charged Asn-tRNA(Asn) or Gln-tRNA(Gln) through the transamidation of misacylated Asp-tRNA(Asn) or Glu-tRNA(Gln) in organisms which lack either or both of asparaginyl-tRNA or glutaminyl-tRNA synthetases. The reaction takes place in the presence of glutamine and ATP through an activated phospho-Asp-tRNA(Asn) or phospho-Glu-tRNA(Gln). This chain is Aspartyl/glutamyl-tRNA(Asn/Gln) amidotransferase subunit B, found in Herpetosiphon aurantiacus (strain ATCC 23779 / DSM 785 / 114-95).